A 469-amino-acid polypeptide reads, in one-letter code: Phosphatidylcholine:ceramide cholinephosphotransferase 1 (469 aa).

Positions 40–177 are disordered; that stretch reads TTKIGPKLET…GDKPASPHDR (138 aa). Basic and acidic residues-rich tracts occupy residues 72-91, 100-117, and 162-177; these read AAEK…HEET, SHHD…GDGK, and VRLE…PHDR. Transmembrane regions (helical) follow at residues 186–206, 231–251, 262–282, 300–320, 327–347, and 355–375; these read LVAF…LSWI, LRLC…LILF, LCFI…VTPV, TFSL…LNLF, LCGD…ALFI, and FYIL…FLVL. The active site involves His336. The Cytoplasmic portion of the chain corresponds to 376 to 469; that stretch reads SHGHYTIDVI…RNGAARPAFE (94 aa). Residues His379 and Asp383 contribute to the active site.

It belongs to the sphingomyelin synthase family.

It is found in the golgi apparatus membrane. It catalyses the reaction an N-acylsphing-4-enine + a 1,2-diacyl-sn-glycero-3-phosphocholine = a sphingomyelin + a 1,2-diacyl-sn-glycerol. The catalysed reaction is an N-acyl-15-methylhexadecasphing-4-enine + a 1,2-diacyl-sn-glycero-3-phosphocholine = an N-acyl-15-methylhexadecasphing-4-enine-1-phosphocholine + a 1,2-diacyl-sn-glycerol. It participates in lipid metabolism; sphingolipid metabolism. In terms of biological role, sphingomyelin synthases (SM synthase or SMS) synthesize the sphingolipid sphingomyelin (SM) through transfer of the phosphatidyl head group of 1,2-diacyl-sn-glycero-3-phosphocholine (phosphatidylcholine, PC) on to the primary hydroxyl of ceramide (N-acylsphingoid base), yielding 1,2-diacyl-sn-glycerol (diacylglycerol, DAG) as a side product. Functions as a bidirectional lipid cholinephosphotransferases capable of converting PC and ceramide to SM and DAG and vice versa depending on the respective levels of ceramide and DAG as phosphocholine acceptors, respectively. This Caenorhabditis elegans protein is Phosphatidylcholine:ceramide cholinephosphotransferase 1 (sms-1).